Reading from the N-terminus, the 154-residue chain is Ubiquitin-like protein 4A-A (154 aa).

The region spanning 1–76 (MILTVKPLQG…LNLVVRPAGE (76 aa)) is the Ubiquitin-like domain.

In terms of assembly, component of the BAT3 complex.

The protein resides in the cytoplasm. The protein localises to the cytosol. Component of the BAT3 complex, a multiprotein complex involved in the post-translational delivery of tail-anchored (TA) membrane proteins to the endoplasmic reticulum membrane. TA membrane proteins, also named type II transmembrane proteins, contain a single C-terminal transmembrane region. This chain is Ubiquitin-like protein 4A-A (ubl4aa), found in Salmo salar (Atlantic salmon).